Here is a 427-residue protein sequence, read N- to C-terminus: 3-phosphoshikimate 1-carboxyvinyltransferase (427 aa).

Residues Lys-20, Ser-21, and Arg-25 each contribute to the 3-phosphoshikimate site. Phosphoenolpyruvate is bound at residue Lys-20. Gly-92 and Arg-120 together coordinate phosphoenolpyruvate. Residues Ser-166, Gln-168, Asp-312, and Lys-339 each coordinate 3-phosphoshikimate. Gln-168 is a phosphoenolpyruvate binding site. The active-site Proton acceptor is the Asp-312. 2 residues coordinate phosphoenolpyruvate: Arg-343 and Arg-385.

It belongs to the EPSP synthase family. In terms of assembly, monomer.

It is found in the cytoplasm. The catalysed reaction is 3-phosphoshikimate + phosphoenolpyruvate = 5-O-(1-carboxyvinyl)-3-phosphoshikimate + phosphate. It functions in the pathway metabolic intermediate biosynthesis; chorismate biosynthesis; chorismate from D-erythrose 4-phosphate and phosphoenolpyruvate: step 6/7. In terms of biological role, catalyzes the transfer of the enolpyruvyl moiety of phosphoenolpyruvate (PEP) to the 5-hydroxyl of shikimate-3-phosphate (S3P) to produce enolpyruvyl shikimate-3-phosphate and inorganic phosphate. The polypeptide is 3-phosphoshikimate 1-carboxyvinyltransferase (Streptococcus agalactiae serotype III (strain NEM316)).